The sequence spans 200 residues: Small ribosomal subunit protein uS4 (200 aa).

An S4 RNA-binding domain is found at 92-155 (SRLDAVVYSL…QKLNVIVESV (64 aa)).

Belongs to the universal ribosomal protein uS4 family. As to quaternary structure, part of the 30S ribosomal subunit. Contacts protein S5. The interaction surface between S4 and S5 is involved in control of translational fidelity.

One of the primary rRNA binding proteins, it binds directly to 16S rRNA where it nucleates assembly of the body of the 30S subunit. In terms of biological role, with S5 and S12 plays an important role in translational accuracy. The chain is Small ribosomal subunit protein uS4 from Staphylococcus aureus (strain MRSA252).